Consider the following 274-residue polypeptide: Ribosomal RNA small subunit methyltransferase A (274 aa).

S-adenosyl-L-methionine-binding residues include H15, L17, G42, E64, D89, and N109.

Belongs to the class I-like SAM-binding methyltransferase superfamily. rRNA adenine N(6)-methyltransferase family. RsmA subfamily.

The protein localises to the cytoplasm. The catalysed reaction is adenosine(1518)/adenosine(1519) in 16S rRNA + 4 S-adenosyl-L-methionine = N(6)-dimethyladenosine(1518)/N(6)-dimethyladenosine(1519) in 16S rRNA + 4 S-adenosyl-L-homocysteine + 4 H(+). Functionally, specifically dimethylates two adjacent adenosines (A1518 and A1519) in the loop of a conserved hairpin near the 3'-end of 16S rRNA in the 30S particle. May play a critical role in biogenesis of 30S subunits. The chain is Ribosomal RNA small subunit methyltransferase A from Synechococcus sp. (strain CC9605).